The following is a 244-amino-acid chain: Mitophagy receptor atg43 (244 aa).

The tract at residues 1–24 (MSSESKGIPIPRSDSNKTSDVSSW) is disordered. The Cytoplasmic segment spans residues 1-198 (MSSESKGIPI…LVALITLRDH (198 aa)). An atg8 interacting motif (AIM) motif is present at residues 28 to 31 (YELI). Residues 105–131 (SLSLLQSKEEDDSSNWETEDSESAVEE) are disordered. The segment covering 113–131 (EEDDSSNWETEDSESAVEE) has biased composition (acidic residues). The interval 165-184 (PPIPDLRFQQSYLQSIQRAN) is involved in MIM complex binding. Required for normal vegetative cell population growth but is dispensable for mitophagy. A helical membrane pass occupies residues 199–215 (VLYPFLSGGMWVFVRHI). The Mitochondrial intermembrane portion of the chain corresponds to 216–244 (FQFLKLQEKGFHFGQSLRRNLGLFSTFKD).

Interacts (via N-terminal atg8 interacting motif) with atg8; the interaction is direct. Interacts with the mitochondrial outer import machinery (MIM) complex subunits mim1 and mim2.

It localises to the mitochondrion outer membrane. In terms of biological role, mitophagy receptor that tethers atg8 to the mitochondrial outer membrane to promote selective autophagy. The protein is Mitophagy receptor atg43 of Schizosaccharomyces pombe (strain 972 / ATCC 24843) (Fission yeast).